A 782-amino-acid chain; its full sequence is Small RNA degrading nuclease 3 (782 aa).

Positions 145-296 (MLSIDCEMVT…HDAAAAMKLV (152 aa)) constitute an Exonuclease domain. One can recognise an RRM 1 domain in the interval 331–410 (AQLFLHKIPH…KKAVLKLSSG (80 aa)). Positions 426–464 (PCEISTSERARAEENNVSSKRQKTEDETEETKEATVNQR) are disordered. The region spanning 469 to 549 (TKLFLHKIPH…KMVVFKLSSG (81 aa)) is the RRM 2 domain. Positions 563-605 (DSPGEISTTKRARTEESNMSSKRQKTEDESEETKEANAKQREA) are disordered. A coiled-coil region spans residues 577 to 605 (EESNMSSKRQKTEDESEETKEANAKQREA). A compositionally biased stretch (basic and acidic residues) spans 595–605 (TKEANAKQREA). The RRM 3 domain maps to 608–688 (TKLLLHKIPL…KMVAFKLSSG (81 aa)). Residues 709 to 779 (ANANHCEDDH…KMKLEKKQSK (71 aa)) adopt a coiled-coil conformation.

The protein belongs to the REXO1/REXO3 family. As to quaternary structure, associated with the Mediator complex.

Its subcellular location is the nucleus. In terms of biological role, 3'-5' exonuclease degrading single-stranded small RNAs. The polypeptide is Small RNA degrading nuclease 3 (SDN3) (Arabidopsis thaliana (Mouse-ear cress)).